The chain runs to 299 residues: ATP phosphoribosyltransferase (299 aa).

Belongs to the ATP phosphoribosyltransferase family. Long subfamily. The cofactor is Mg(2+).

It is found in the cytoplasm. It carries out the reaction 1-(5-phospho-beta-D-ribosyl)-ATP + diphosphate = 5-phospho-alpha-D-ribose 1-diphosphate + ATP. The protein operates within amino-acid biosynthesis; L-histidine biosynthesis; L-histidine from 5-phospho-alpha-D-ribose 1-diphosphate: step 1/9. Its activity is regulated as follows. Feedback inhibited by histidine. In terms of biological role, catalyzes the condensation of ATP and 5-phosphoribose 1-diphosphate to form N'-(5'-phosphoribosyl)-ATP (PR-ATP). Has a crucial role in the pathway because the rate of histidine biosynthesis seems to be controlled primarily by regulation of HisG enzymatic activity. The sequence is that of ATP phosphoribosyltransferase from Shewanella denitrificans (strain OS217 / ATCC BAA-1090 / DSM 15013).